Here is a 313-residue protein sequence, read N- to C-terminus: uncharacterized protein (313 aa).

The a divalent metal cation site is built by His-8, His-10, Glu-126, His-180, His-207, and Asp-262.

The protein belongs to the metallo-dependent hydrolases superfamily. TatD-type hydrolase family. A divalent metal cation is required as a cofactor.

Functionally, putative deoxyribonuclease. This is an uncharacterized protein from Saccharomyces cerevisiae (strain ATCC 204508 / S288c) (Baker's yeast).